Reading from the N-terminus, the 65-residue chain is Large ribosomal subunit protein bL35 (65 aa).

It belongs to the bacterial ribosomal protein bL35 family.

The chain is Large ribosomal subunit protein bL35 from Clostridium acetobutylicum (strain ATCC 824 / DSM 792 / JCM 1419 / IAM 19013 / LMG 5710 / NBRC 13948 / NRRL B-527 / VKM B-1787 / 2291 / W).